We begin with the raw amino-acid sequence, 465 residues long: FAD-dependent monooxygenase pyr5 (465 aa).

The N-terminal stretch at 1 to 16 is a signal peptide; that stretch reads MRVLIIGGSIAGLTLA. FAD is bound by residues E30, G44, and R103. Y210 is a catalytic residue. FAD is bound by residues D306 and A319. The chain crosses the membrane as a helical span at residues 440–456; sequence PTFPLTVAGLCLVAIVI.

Belongs to the paxM FAD-dependent monooxygenase family. It depends on FAD as a cofactor.

It localises to the membrane. The enzyme catalyses 4-hydroxy-3-[(2E,6E)-farnesyl]-6-(pyridin-3-yl)-2H-pyran-2-one + NADPH + O2 + H(+) = 2-oxo-3-[(8S)-epoxy-(2E,6E)-farnesyl]-6-(pyridin-3-yl)-2H-pyran-4-olate + NADP(+) + H2O. It participates in secondary metabolite biosynthesis; terpenoid biosynthesis. Functionally, FAD-dependent monooxygenase; part of the gene cluster that mediates the biosynthesis of pyripyropene A, a specific human acyl-coenzyme A:cholesterol acyltransferase 2 inhibitor. The first step of the pathway is the synthesis of nicotinyl-CoA from nicotinic acid by the nicotinic acid-CoA ligase pyr1. Nicotinyl-CoA is then a substrate of polyketide synthase pyr2 to produce 4-hydroxy-6-(3-pyridinyl)-2H-pyran-2-one (HPPO) which is further prenylated by the polyprenyl transferase pyr6 to yield farnesyl-HPPO. The next steps consist of an epoxidation of farnesyl-HPPO to epoxyfarnesyl-HPPO by FAD-dependent monooxygenase pyr5 and a cyclization of the terpenoid portion by the terpene cyclase pyr4 to yield deacetyl-pyripyropene E. The 2 cytochrome P450 monooxygenases pyr3 and pyr9, and the 2 acetyltransferases pyr7 and pyr8 are involved in the conversion of deacetyl-pyripyropene E into pyripyropene A through several cycles of oxidation and acetylation steps. Pyr7 acetylates deacetyl-pyripyropene E to pyripyropene E which is oxidized to 11-deacetyl-pyripyropene O by pyr3, which is in turn acetylated into pyripyropene O by pyr8. Pyripyropene O is then oxidized to deacetyl-pyripyropene A by pyr9. Deacetyl-pyripyropene A is finally acetylated to pyripyropene A by pyr8. The protein is FAD-dependent monooxygenase pyr5 of Aspergillus fumigatus (strain ATCC MYA-4609 / CBS 101355 / FGSC A1100 / Af293) (Neosartorya fumigata).